The following is a 215-amino-acid chain: Thiamine-phosphate synthase (215 aa).

Residues Gln-43–Lys-47 and Asn-78 contribute to the 4-amino-2-methyl-5-(diphosphooxymethyl)pyrimidine site. Mg(2+) contacts are provided by Asp-79 and Asp-98. Ser-117 is a binding site for 4-amino-2-methyl-5-(diphosphooxymethyl)pyrimidine. Residue Thr-143–Ser-145 coordinates 2-[(2R,5Z)-2-carboxy-4-methylthiazol-5(2H)-ylidene]ethyl phosphate. Lys-146 contacts 4-amino-2-methyl-5-(diphosphooxymethyl)pyrimidine. 2-[(2R,5Z)-2-carboxy-4-methylthiazol-5(2H)-ylidene]ethyl phosphate-binding positions include Gly-174 and Ile-194 to Ser-195.

Belongs to the thiamine-phosphate synthase family. Requires Mg(2+) as cofactor.

It carries out the reaction 2-[(2R,5Z)-2-carboxy-4-methylthiazol-5(2H)-ylidene]ethyl phosphate + 4-amino-2-methyl-5-(diphosphooxymethyl)pyrimidine + 2 H(+) = thiamine phosphate + CO2 + diphosphate. It catalyses the reaction 2-(2-carboxy-4-methylthiazol-5-yl)ethyl phosphate + 4-amino-2-methyl-5-(diphosphooxymethyl)pyrimidine + 2 H(+) = thiamine phosphate + CO2 + diphosphate. The catalysed reaction is 4-methyl-5-(2-phosphooxyethyl)-thiazole + 4-amino-2-methyl-5-(diphosphooxymethyl)pyrimidine + H(+) = thiamine phosphate + diphosphate. It functions in the pathway cofactor biosynthesis; thiamine diphosphate biosynthesis; thiamine phosphate from 4-amino-2-methyl-5-diphosphomethylpyrimidine and 4-methyl-5-(2-phosphoethyl)-thiazole: step 1/1. Condenses 4-methyl-5-(beta-hydroxyethyl)thiazole monophosphate (THZ-P) and 2-methyl-4-amino-5-hydroxymethyl pyrimidine pyrophosphate (HMP-PP) to form thiamine monophosphate (TMP). This Lactococcus lactis subsp. lactis (strain IL1403) (Streptococcus lactis) protein is Thiamine-phosphate synthase.